Consider the following 141-residue polypeptide: Nucleoside diphosphate kinase (141 aa).

ATP-binding residues include Lys11, Phe59, Arg87, Thr93, Arg104, and Asn114. His117 functions as the Pros-phosphohistidine intermediate in the catalytic mechanism.

This sequence belongs to the NDK family. In terms of assembly, homotetramer. The cofactor is Mg(2+).

The protein resides in the cytoplasm. It carries out the reaction a 2'-deoxyribonucleoside 5'-diphosphate + ATP = a 2'-deoxyribonucleoside 5'-triphosphate + ADP. The catalysed reaction is a ribonucleoside 5'-diphosphate + ATP = a ribonucleoside 5'-triphosphate + ADP. In terms of biological role, major role in the synthesis of nucleoside triphosphates other than ATP. The ATP gamma phosphate is transferred to the NDP beta phosphate via a ping-pong mechanism, using a phosphorylated active-site intermediate. This Pseudomonas fluorescens (strain Pf0-1) protein is Nucleoside diphosphate kinase.